The following is a 359-amino-acid chain: Molybdenum import ATP-binding protein ModC (359 aa).

The region spanning 1–233 (MSGLTVSIRG…IDAESEGGGV (233 aa)) is the ABC transporter domain. Residue 32-39 (GHSGAGKT) coordinates ATP. The region spanning 289-355 (AISIRNLLPV…VKAVSVDRAA (67 aa)) is the Mop domain.

It belongs to the ABC transporter superfamily. Molybdate importer (TC 3.A.1.8) family. The complex is composed of two ATP-binding proteins (ModC), two transmembrane proteins (ModB) and a solute-binding protein (ModA).

The protein localises to the cell inner membrane. It catalyses the reaction molybdate(out) + ATP + H2O = molybdate(in) + ADP + phosphate + H(+). Functionally, part of the ABC transporter complex ModABC involved in molybdenum import. Responsible for energy coupling to the transport system. The protein is Molybdenum import ATP-binding protein ModC of Brucella abortus (strain 2308).